We begin with the raw amino-acid sequence, 204 residues long: Ancillary SecYEG translocon subunit (204 aa).

The Cytoplasmic portion of the chain corresponds to 1 to 23 (MAYSIEEEQEINQLKDWWKENGK). A helical membrane pass occupies residues 24–42 (TIIVAFILGVGGMFGWRYW). Topologically, residues 43–204 (QTHQAEQIAQ…QMAKMKLNNL (162 aa)) are periplasmic.

It belongs to the YfgM family. As to quaternary structure, interacts with the SecYEG translocon. Forms a complex with PpiD.

The protein localises to the cell inner membrane. Functionally, may mediate protein transfer from the SecYEG translocon to the periplasmic chaperone network via its periplasmic C-terminal region. This is Ancillary SecYEG translocon subunit from Haemophilus influenzae (strain ATCC 51907 / DSM 11121 / KW20 / Rd).